The following is a 336-amino-acid chain: uncharacterized protein (336 aa).

Residues alanine 162–aspartate 195 form a disordered region. Residues serine 169–threonine 187 show a composition bias toward low complexity.

This sequence belongs to the AHA1 family.

This is an uncharacterized protein from Schizosaccharomyces pombe (strain 972 / ATCC 24843) (Fission yeast).